The chain runs to 334 residues: Ribosomal RNA small subunit methyltransferase H (334 aa).

S-adenosyl-L-methionine contacts are provided by residues 54–56, D74, F100, D121, and Q128; that span reads GGH. The interval 272–318 is disordered; it reads RHSKGQYPEDENLPMPPKRPRYFSKPKRVGPSKAEISNNPRSRSAWL. The span at 289–301 shows a compositional bias: basic residues; that stretch reads KRPRYFSKPKRVG.

The protein belongs to the methyltransferase superfamily. RsmH family.

It localises to the cytoplasm. The catalysed reaction is cytidine(1402) in 16S rRNA + S-adenosyl-L-methionine = N(4)-methylcytidine(1402) in 16S rRNA + S-adenosyl-L-homocysteine + H(+). Functionally, specifically methylates the N4 position of cytidine in position 1402 (C1402) of 16S rRNA. This chain is Ribosomal RNA small subunit methyltransferase H, found in Psychrobacter arcticus (strain DSM 17307 / VKM B-2377 / 273-4).